The sequence spans 591 residues: N-acetylgalactosaminyltransferase 7 (591 aa).

Over 1–11 (MRVSTIRSGRI) the chain is Cytoplasmic. The chain crosses the membrane as a helical; Signal-anchor for type II membrane protein span at residues 12 to 29 (CRLALCLLVLLPLLYLLA). N30 carries N-linked (GlcNAc...) asparagine glycosylation. Residues 30 to 591 (NWSDHHKRVQ…WWFKEIRPRW (562 aa)) lie on the Lumenal side of the membrane. A disordered region spans residues 68 to 100 (DGLGNFEPKDVKPRSGPGENGEAHSLSPDKKHM). 5 cysteine pairs are disulfide-bonded: C132–C367, C358–C441, C479–C496, C519–C532, and C558–C573. The catalytic subdomain A stretch occupies residues 141 to 251 (LPRTSVIIVF…TNWLPPLLAP (111 aa)). Substrate-binding residues include D182 and R212. Residues D235 and H237 each contribute to the Mn(2+) site. Positions 313–375 (PYRSPTHAGG…PCSRVGHVYR (63 aa)) are catalytic subdomain B. W344 contributes to the substrate binding site. H372 provides a ligand contact to Mn(2+). 2 residues coordinate substrate: R375 and Y380. Residues 466–585 (LHWGELRSVA…NDSYQQWWFK (120 aa)) form the Ricin B-type lectin domain. N576 carries an N-linked (GlcNAc...) asparagine glycan.

It belongs to the glycosyltransferase 2 family. GalNAc-T subfamily. Requires Mn(2+) as cofactor. In terms of tissue distribution, expressed in developing oocytes and egg chambers. During embryonic stages 9-11, expressed in the primordium of the foregut, midgut and hindgut. Expressed in the salivary glands from embryonic stage 12 onwards. During embryonic stages 12-13, expressed in the posterior midgut and hindgut. During embryonic stages 14-15, expression continues in the hindgut. During embryonic stages 16-17, expressed in the antennomaxillary complex. In third instar larvae, ubiquitously expressed in wing, with increased expression in the notum and ventral wing pouch, eye-antennal, leg and haltere imaginal disks.

The protein localises to the golgi apparatus membrane. It catalyses the reaction L-seryl-[protein] + UDP-N-acetyl-alpha-D-galactosamine = a 3-O-[N-acetyl-alpha-D-galactosaminyl]-L-seryl-[protein] + UDP + H(+). The catalysed reaction is L-threonyl-[protein] + UDP-N-acetyl-alpha-D-galactosamine = a 3-O-[N-acetyl-alpha-D-galactosaminyl]-L-threonyl-[protein] + UDP + H(+). The protein operates within protein modification; protein glycosylation. Functionally, glycopeptide transferase involved in O-linked oligosaccharide biosynthesis, which catalyzes the transfer of an N-acetyl-D-galactosamine residue to an already glycosylated peptide. In contrast to other proteins of the family, it does not act as a peptide transferase that transfers GalNAc onto serine or threonine residue on the protein receptor, but instead requires the prior addition of a GalNAc on a peptide before adding additional GalNAc moieties. Some peptide transferase activity is however not excluded, considering that its appropriate peptide substrate may remain unidentified. Prefers the monoglycosylated Muc5AC-3 as substrate. Might have a role in protein O-glycosylation in the Golgi and thereby in establishing and/or maintaining a proper secretory apparatus structure. This Drosophila melanogaster (Fruit fly) protein is N-acetylgalactosaminyltransferase 7.